We begin with the raw amino-acid sequence, 204 residues long: Large ribosomal subunit protein eL15 (204 aa).

It belongs to the eukaryotic ribosomal protein eL15 family. Component of the large ribosomal subunit.

The protein localises to the cytoplasm. Component of the large ribosomal subunit. The ribosome is a large ribonucleoprotein complex responsible for the synthesis of proteins in the cell. The chain is Large ribosomal subunit protein eL15 (rpl15) from Silurus meridionalis (Southern catfish).